The primary structure comprises 187 residues: Capsid protein (187 aa).

Positions 150–187 (RRGGARASRSPRRRTPSPRRRRSQSPRRRRSQSPSANC) are disordered. Positions 158-180 (RSPRRRTPSPRRRRSQSPRRRRS) are enriched in basic residues. Phosphoserine; by host is present on residues Ser159, Ser166, and Ser174. The 1; half-length repeat unit spans residues 159-165 (SPRRRTP). Residues 159 to 181 (SPRRRTPSPRRRRSQSPRRRRSQ) form a 3 X 8 AA repeats of S-P-R-R-R-[PR]-S-Q region. Positions 162–179 (RRTPSPRRRRSQSPRRRR) match the Bipartite nuclear localization signal motif. Repeat copies occupy residues 166 to 173 (SPRRRRSQ) and 174 to 181 (SPRRRRSQ). Residues 181-187 (QSPSANC) form an RNA binding region.

Belongs to the orthohepadnavirus core antigen family. In terms of assembly, homodimerizes, then multimerizes. Interacts with cytosol exposed regions of viral L glycoprotein present in the reticulum-to-Golgi compartment. Interacts with human FLNB. Phosphorylated form interacts with host importin alpha; this interaction depends on the exposure of the NLS, which itself depends upon genome maturation and/or phosphorylation of the capsid protein. Interacts with host NUP153. In terms of processing, phosphorylated by host SRPK1, SRPK2, and maybe protein kinase C or GAPDH. Phosphorylation is critical for pregenomic RNA packaging. Protein kinase C phosphorylation is stimulated by HBx protein and may play a role in transport of the viral genome to the nucleus at the late step during the viral replication cycle.

The protein localises to the virion. It is found in the host cytoplasm. Self assembles to form an icosahedral capsid. Most capsids appear to be large particles with an icosahedral symmetry of T=4 and consist of 240 copies of capsid protein, though a fraction forms smaller T=3 particles consisting of 180 capsid proteins. Entering capsids are transported along microtubules to the nucleus. Phosphorylation of the capsid is thought to induce exposure of nuclear localization signal in the C-terminal portion of the capsid protein that allows binding to the nuclear pore complex via the importin (karyopherin-) alpha and beta. Capsids are imported in intact form through the nuclear pore into the nuclear basket, where it probably binds NUP153. Only capsids that contain the mature viral genome can release the viral DNA and capsid protein into the nucleoplasm. Immature capsids get stuck in the basket. Capsids encapsulate the pre-genomic RNA and the P protein. Pre-genomic RNA is reverse-transcribed into DNA while the capsid is still in the cytoplasm. The capsid can then either be directed to the nucleus, providing more genomes for transcription, or bud through the endoplasmic reticulum to provide new virions. The chain is Capsid protein from Marmota monax (Woodchuck).